Here is a 299-residue protein sequence, read N- to C-terminus: 21S rRNA pseudouridine(2819) synthase (299 aa).

Aspartate 106 is an active-site residue.

This sequence belongs to the pseudouridine synthase RluA family.

Its subcellular location is the mitochondrion. The enzyme catalyses uridine(2819) in 21S rRNA = pseudouridine(2819) in 21S rRNA. Pseudouridylate synthase responsible for the pseudouridine-2819 formation in mitochondrial 21S rRNA. May modulate the efficiency or the fidelity of the mitochondrial translation machinery. The polypeptide is 21S rRNA pseudouridine(2819) synthase (PUS5) (Kluyveromyces lactis (strain ATCC 8585 / CBS 2359 / DSM 70799 / NBRC 1267 / NRRL Y-1140 / WM37) (Yeast)).